The primary structure comprises 240 residues: Ubiquinone biosynthesis O-methyltransferase (240 aa).

S-adenosyl-L-methionine-binding residues include Arg44, Gly64, Asp85, and Met129.

This sequence belongs to the methyltransferase superfamily. UbiG/COQ3 family.

It catalyses the reaction a 3-demethylubiquinol + S-adenosyl-L-methionine = a ubiquinol + S-adenosyl-L-homocysteine + H(+). The catalysed reaction is a 3-(all-trans-polyprenyl)benzene-1,2-diol + S-adenosyl-L-methionine = a 2-methoxy-6-(all-trans-polyprenyl)phenol + S-adenosyl-L-homocysteine + H(+). Its pathway is cofactor biosynthesis; ubiquinone biosynthesis. Its function is as follows. O-methyltransferase that catalyzes the 2 O-methylation steps in the ubiquinone biosynthetic pathway. This chain is Ubiquinone biosynthesis O-methyltransferase, found in Escherichia coli O81 (strain ED1a).